The sequence spans 342 residues: Anthranilate phosphoribosyltransferase (342 aa).

Residues Gly83, Gly86–Asp87, Thr91, Asn93–Thr96, Lys111–Ser119, and Ser123 contribute to the 5-phospho-alpha-D-ribose 1-diphosphate site. Anthranilate is bound at residue Gly83. Ser95 provides a ligand contact to Mg(2+). Asn114 provides a ligand contact to anthranilate. Arg169 is an anthranilate binding site. Residues Asp228 and Glu229 each contribute to the Mg(2+) site.

The protein belongs to the anthranilate phosphoribosyltransferase family. As to quaternary structure, homodimer. Mg(2+) serves as cofactor.

It carries out the reaction N-(5-phospho-beta-D-ribosyl)anthranilate + diphosphate = 5-phospho-alpha-D-ribose 1-diphosphate + anthranilate. Its pathway is amino-acid biosynthesis; L-tryptophan biosynthesis; L-tryptophan from chorismate: step 2/5. Functionally, catalyzes the transfer of the phosphoribosyl group of 5-phosphorylribose-1-pyrophosphate (PRPP) to anthranilate to yield N-(5'-phosphoribosyl)-anthranilate (PRA). The polypeptide is Anthranilate phosphoribosyltransferase (Paraburkholderia phymatum (strain DSM 17167 / CIP 108236 / LMG 21445 / STM815) (Burkholderia phymatum)).